We begin with the raw amino-acid sequence, 83 residues long: Colicin-E5 immunity protein (83 aa).

Its function is as follows. This protein is able to protect a cell, which harbors the plasmid ColE5 encoding colicin E5, against colicin E5. The polypeptide is Colicin-E5 immunity protein (imm) (Escherichia coli).